The following is a 333-amino-acid chain: L-asparagine oxygenase (333 aa).

L-asparagine contacts are provided by E125 and N146. Fe cation is bound by residues H155 and E157. L-asparagine contacts are provided by E157 and N158. A Fe cation-binding site is contributed by H287. R301 is a binding site for 2-oxoglutarate. Residue R305 coordinates L-asparagine.

Belongs to the clavaminate synthase family. Requires Fe(2+) as cofactor.

The catalysed reaction is L-asparagine + 2-oxoglutarate + O2 = (2S,3S)-3-hydroxyasparagine + succinate + CO2. Its pathway is antibiotic biosynthesis; calcium-dependent antibiotic biosynthesis. Its function is as follows. Catalyzes the 3-hydroxylation of L-asparagine to (2S,3S)-3-hydroxyasparagine. The 3-hydroxylated asparagine produced is incorporated at position 9 during the biosynthesis of the non-ribosomally synthesized calcium-dependent antibiotic (CDA), a 11-residue acidic lipopeptide lactone. Is able to hydroxylate only free L-asparagine, since it hydroxylates neither a CDA analog with unmodified Asn at position 9 nor a peptidyl-carrier-protein (PCP)-bound asparagine. Is not active toward D-asparagine. The protein is L-asparagine oxygenase (asnO) of Streptomyces coelicolor (strain ATCC BAA-471 / A3(2) / M145).